A 169-amino-acid polypeptide reads, in one-letter code: Regulator of G-protein signaling rgs-2 (169 aa).

In terms of domain architecture, RGS spans 39-158 (GWSQSFENLM…FLASNIYKTV (120 aa)).

May be phosphorylated and activated by egl-4. In terms of tissue distribution, expressed in a subset of neurons including ventral cord and head- and tail-ganglia neurons. Also expressed in non-neuronal cells including pharyngeal and uterine muscles.

Its function is as follows. Weakly inhibits G protein signaling in nervous system, interacting preferentially with the G(O) subfamily member goa-1. In vitro, it acts as a GTPase activator of goa-1. Rgs-1 and rgs-2 redundantly adjust signaling when worms are fed to allow rapid induction of egg-laying behavior. Modulates chemotaxis responses by regulating negatively the sensitivity to quinine in ASH sensory neurons. The sequence is that of Regulator of G-protein signaling rgs-2 (rgs-2) from Caenorhabditis elegans.